The sequence spans 201 residues: Peptidyl-tRNA hydrolase (201 aa).

Tyrosine 14 contributes to the tRNA binding site. The active-site Proton acceptor is the histidine 19. The tRNA site is built by phenylalanine 64, asparagine 66, and asparagine 112.

It belongs to the PTH family. Monomer.

It is found in the cytoplasm. The catalysed reaction is an N-acyl-L-alpha-aminoacyl-tRNA + H2O = an N-acyl-L-amino acid + a tRNA + H(+). Its function is as follows. Hydrolyzes ribosome-free peptidyl-tRNAs (with 1 or more amino acids incorporated), which drop off the ribosome during protein synthesis, or as a result of ribosome stalling. Catalyzes the release of premature peptidyl moieties from peptidyl-tRNA molecules trapped in stalled 50S ribosomal subunits, and thus maintains levels of free tRNAs and 50S ribosomes. The polypeptide is Peptidyl-tRNA hydrolase (Rhodopseudomonas palustris (strain BisA53)).